A 398-amino-acid polypeptide reads, in one-letter code: MIDIDRQLEHIKRGCAELIDEGELRKKLERGTPLRIKAGFDPTAPDLHLGHTVLIHKLRHFQELGHTVIFLIGDFTGLIGDPSGRSDTRPPLTREQVLANAETYKQQVFKILDPEKTVVDFNSRWMGEFGAADFIRLASRYTVARMMERDDFEKRYKEGRPIAVHEFLYPLVQGYDSVALKADVELGGTDQKFNLLVGRHLQSQYGQEPQCILTMPLLEGLDGVKKMSKSLGNYVGIDESPADMFGKLMSVSDELMWRYFELISSRSLDEIADLRRKVETGEAHPKLVKESLAYELTTRYHGEDKAAEAQQGFNAVFAGGGVPDDAPVHACDHGDDSTPPAFLEAAGLVKSRGEAKRLIKEGALSVDGVRCDDANSPLASGEYVIKLGKKRFLRLTVR.

The 'HIGH' region signature appears at 42–51 (PTAPDLHLGH). The 'KMSKS' region motif lies at 226–230 (KMSKS). Lys-229 is an ATP binding site. One can recognise an S4 RNA-binding domain in the interval 341 to 397 (AFLEAAGLVKSRGEAKRLIKEGALSVDGVRCDDANSPLASGEYVIKLGKKRFLRLTV).

The protein belongs to the class-I aminoacyl-tRNA synthetase family. TyrS type 2 subfamily. Homodimer.

The protein resides in the cytoplasm. It catalyses the reaction tRNA(Tyr) + L-tyrosine + ATP = L-tyrosyl-tRNA(Tyr) + AMP + diphosphate + H(+). Catalyzes the attachment of tyrosine to tRNA(Tyr) in a two-step reaction: tyrosine is first activated by ATP to form Tyr-AMP and then transferred to the acceptor end of tRNA(Tyr). This is Tyrosine--tRNA ligase from Nitratidesulfovibrio vulgaris (strain ATCC 29579 / DSM 644 / CCUG 34227 / NCIMB 8303 / VKM B-1760 / Hildenborough) (Desulfovibrio vulgaris).